Reading from the N-terminus, the 544-residue chain is Chaperonin GroEL (544 aa).

ATP contacts are provided by residues 30–33 (TLGP), lysine 51, 87–91 (DGTTT), glycine 415, 479–481 (NAA), and aspartate 495.

The protein belongs to the chaperonin (HSP60) family. As to quaternary structure, forms a cylinder of 14 subunits composed of two heptameric rings stacked back-to-back. Interacts with the co-chaperonin GroES.

The protein resides in the cytoplasm. It catalyses the reaction ATP + H2O + a folded polypeptide = ADP + phosphate + an unfolded polypeptide.. Together with its co-chaperonin GroES, plays an essential role in assisting protein folding. The GroEL-GroES system forms a nano-cage that allows encapsulation of the non-native substrate proteins and provides a physical environment optimized to promote and accelerate protein folding. This chain is Chaperonin GroEL, found in Acinetobacter baylyi (strain ATCC 33305 / BD413 / ADP1).